The sequence spans 942 residues: Lambda-carrageenase (942 aa).

An N-terminal signal peptide occupies residues 1–25 (MKIKILSAMVASSLLIGCVIPTVKA).

Monomer.

Its subcellular location is the secreted. The enzyme catalyses Endohydrolysis of (1-&gt;4)-beta-linkages in the backbone of lambda-carrageenan, resulting in the tetrasaccharide alpha-D-Galp2,6S2-(1-&gt;3)-beta-D-Galp2S-(1-&gt;4)-alpha-D-Galp2,6S2-(1-&gt;3)-D-Galp2S.. Hydrolyzes lambda-carrageenan with inversion of anomeric configuration. Does not hydrolyze iota- and kappa-carrageenans, agarose or porphyran. This is Lambda-carrageenase from Pseudoalteromonas carrageenovora (Alteromonas carrageenovora).